A 629-amino-acid chain; its full sequence is tRNA uridine 5-carboxymethylaminomethyl modification enzyme MnmG (629 aa).

FAD is bound by residues Gly13 to Gly18, Val125, and Ser180. Residue Gly273–Phe287 participates in NAD(+) binding. Gln370 is an FAD binding site.

This sequence belongs to the MnmG family. As to quaternary structure, homodimer. Heterotetramer of two MnmE and two MnmG subunits. The cofactor is FAD.

It is found in the cytoplasm. In terms of biological role, NAD-binding protein involved in the addition of a carboxymethylaminomethyl (cmnm) group at the wobble position (U34) of certain tRNAs, forming tRNA-cmnm(5)s(2)U34. This is tRNA uridine 5-carboxymethylaminomethyl modification enzyme MnmG from Shewanella sp. (strain ANA-3).